The chain runs to 77 residues: Putative defensin-like protein 162 (77 aa).

A signal peptide spans 1 to 27; it reads MAKQLCSYMFISMFILSAFLALPSAEG. 4 cysteine pairs are disulfide-bonded: C34-C77, C44-C63, C49-C71, and C53-C73.

It belongs to the DEFL family.

Its subcellular location is the secreted. This chain is Putative defensin-like protein 162 (LCR37), found in Arabidopsis thaliana (Mouse-ear cress).